Reading from the N-terminus, the 175-residue chain is MSERIIMDEAAIQRTVTRMAHEILEYNKGTENLVLLGIKTRGEFLAIRIQDKINQIEQKIVPTGTIDITHFRDDIEIANKQITQDAIEIDADINDKVVIIIDDVLYTGRTVRASLDAILLHSRPIKIGLAALVDRGHRELPIRADFVGKNIPTSKEESVLVYLNEKDSQNAVIIE.

Substrate contacts are provided by residues 40-41 (TR), 102-110 (DDVLYTGRT), Arg135, and Val159. Positions 98–110 (VIIIDDVLYTGRT) match the PRPP-binding motif.

The protein belongs to the purine/pyrimidine phosphoribosyltransferase family. PyrR subfamily. In terms of assembly, homodimer and homohexamer; in equilibrium.

It catalyses the reaction UMP + diphosphate = 5-phospho-alpha-D-ribose 1-diphosphate + uracil. In terms of biological role, regulates transcriptional attenuation of the pyrimidine nucleotide (pyr) operon by binding in a uridine-dependent manner to specific sites on pyr mRNA. This disrupts an antiterminator hairpin in the RNA and favors formation of a downstream transcription terminator, leading to a reduced expression of downstream genes. Functionally, also displays a weak uracil phosphoribosyltransferase activity which is not physiologically significant. The sequence is that of Bifunctional protein PyrR from Staphylococcus haemolyticus (strain JCSC1435).